Here is a 1209-residue protein sequence, read N- to C-terminus: DNA-directed RNA polymerase subunit beta'' (1209 aa).

Zn(2+) contacts are provided by cysteine 233, cysteine 308, cysteine 315, and cysteine 318.

Belongs to the RNA polymerase beta' chain family. RpoC2 subfamily. In plastids the minimal PEP RNA polymerase catalytic core is composed of four subunits: alpha, beta, beta', and beta''. When a (nuclear-encoded) sigma factor is associated with the core the holoenzyme is formed, which can initiate transcription. Zn(2+) is required as a cofactor.

It is found in the plastid. The protein localises to the chloroplast. The catalysed reaction is RNA(n) + a ribonucleoside 5'-triphosphate = RNA(n+1) + diphosphate. In terms of biological role, DNA-dependent RNA polymerase catalyzes the transcription of DNA into RNA using the four ribonucleoside triphosphates as substrates. The polypeptide is DNA-directed RNA polymerase subunit beta'' (Pinus koraiensis (Korean pine)).